Consider the following 528-residue polypeptide: Protein spinster homolog 1 (528 aa).

The interval 1–38 (MAGSDTAPFLSQADDPDDGPAPGHPGLPGPMGNPKSGE) is disordered. A2 bears the N-acetylalanine mark. 12 helical membrane passes run 60-80 (LIVV…FTVA), 98-118 (GLIQ…FGYL), 126-146 (YLMC…SFIP), 160-180 (VGVG…DLFV), 187-207 (MLSI…IAGS), 218-238 (WALR…FLVV), 278-298 (LGFT…PAFL), 323-343 (LIFG…GVEI), 357-377 (LVCA…LACA), 381-401 (IVAT…NWAI), 421-441 (FQIV…IGLI), and 465-485 (MLCA…AMFI). A Phosphoserine modification is found at S518.

This sequence belongs to the major facilitator superfamily. Spinster (TC 2.A.1.49) family. In terms of assembly, interacts with BCL2 and BCL2L1.

The protein localises to the lysosome membrane. It carries out the reaction a 1-acyl-sn-glycero-3-phosphocholine(out) + H(+)(out) = a 1-acyl-sn-glycero-3-phosphocholine(in) + H(+)(in). It catalyses the reaction 1-hexadecanoyl-sn-glycero-3-phosphocholine(out) + H(+)(out) = 1-hexadecanoyl-sn-glycero-3-phosphocholine(in) + H(+)(in). The catalysed reaction is 1-(9Z-octadecenoyl)-sn-glycero-3-phosphocholine(out) + H(+)(out) = 1-(9Z-octadecenoyl)-sn-glycero-3-phosphocholine(in) + H(+)(in). The enzyme catalyses 1-(5Z,8Z,11Z,14Z-eicosatetraenoyl)-sn-glycero-3-phosphocholine(out) + H(+)(out) = 1-(5Z,8Z,11Z,14Z-eicosatetraenoyl)-sn-glycero-3-phosphocholine(in) + H(+)(in). It carries out the reaction 1-(4Z,7Z,10Z,13Z,16Z,19Z-docosahexaenoyl)-sn-glycero-3-phosphocholine(out) + H(+)(out) = 1-(4Z,7Z,10Z,13Z,16Z,19Z-docosahexaenoyl)-sn-glycero-3-phosphocholine(in) + H(+)(in). It catalyses the reaction a 1-acyl-sn-glycero-3-phosphoethanolamine(out) + H(+)(out) = a 1-acyl-sn-glycero-3-phosphoethanolamine(in) + H(+)(in). The catalysed reaction is 1-(9Z-octadecenoyl)-sn-glycero-3-phosphoethanolamine(out) + H(+)(out) = 1-(9Z-octadecenoyl)-sn-glycero-3-phosphoethanolamine(in) + H(+)(in). The enzyme catalyses 1-acyl-sn-glycero-3-phospho-(1'-sn-glycerol)(out) + H(+)(out) = 1-acyl-sn-glycero-3-phospho-(1'-sn-glycerol)(in) + H(+)(in). It carries out the reaction 1-(9Z-octadecenoyl)-sn-glycero-3-phospho-(1'-sn-glycerol)(out) + H(+)(out) = 1-(9Z-octadecenoyl)-sn-glycero-3-phospho-(1'-sn-glycerol)(in) + H(+)(in). It catalyses the reaction a 1-O-(1Z-alkenyl)-sn-glycero-3-phosphocholine(out) + H(+)(out) = a 1-O-(1Z-alkenyl)-sn-glycero-3-phosphocholine(in) + H(+)(in). The catalysed reaction is 1-(1Z-hexadecenyl)-sn-glycero-3-phosphocholine(out) + H(+)(out) = 1-(1Z-hexadecenyl)-sn-glycero-3-phosphocholine(in) + H(+)(in). The enzyme catalyses a 1-O-(1Z-alkenyl)-sn-glycero-3-phosphoethanolamine(out) + H(+)(out) = a 1-O-(1Z-alkenyl)-sn-glycero-3-phosphoethanolamine(in) + H(+)(in). It carries out the reaction 1-O-(1Z-hexadecenyl)-sn-glycero-3-phosphoethanolamine(out) + H(+)(out) = 1-O-(1Z-hexadecenyl)-sn-glycero-3-phosphoethanolamine(in) + H(+)(in). Functionally, plays a critical role in the phospholipid salvage pathway from lysosomes to the cytosol. Mediates the rate-limiting, proton-dependent, lysosomal efflux of lysophospholipids, which can then be reacylated by acyltransferases in the endoplasmic reticulum to form phospholipids. Selective for zwitterionic headgroups such as lysophosphatidylcholine (LPC) and lysophosphatidylethanolamine (LPE), can also transport lysophosphatidylglycerol (LPG), but not other anionic lysophospholipids, sphingosine, nor sphingomyelin. Transports lysophospholipids with saturated, monounsaturated, and polyunsaturated fatty acids, such as 1-hexadecanoyl-sn-glycero-3-phosphocholine, 1-(9Z-octadecenoyl)-sn-glycero-3-phosphocholine and 1-(4Z,7Z,10Z,13Z,16Z,19Z-docosahexaenoyl)-sn-glycero-3-phosphocholine, respectively. Can also transport lysoplasmalogen (LPC with a fatty alcohol) such as 1-(1Z-hexadecenyl)-sn-glycero-3-phosphocholine. Essential player in lysosomal homeostasis. Crucial for cell survival under conditions of nutrient limitation. May be involved in necrotic or autophagic cell death. This is Protein spinster homolog 1 (Spns1) from Rattus norvegicus (Rat).